A 368-amino-acid polypeptide reads, in one-letter code: Anhydro-N-acetylmuramic acid kinase (368 aa).

Position 11–18 (11–18 (GTSLDGID)) interacts with ATP.

This sequence belongs to the anhydro-N-acetylmuramic acid kinase family.

It carries out the reaction 1,6-anhydro-N-acetyl-beta-muramate + ATP + H2O = N-acetyl-D-muramate 6-phosphate + ADP + H(+). The protein operates within amino-sugar metabolism; 1,6-anhydro-N-acetylmuramate degradation. It functions in the pathway cell wall biogenesis; peptidoglycan recycling. Functionally, catalyzes the specific phosphorylation of 1,6-anhydro-N-acetylmuramic acid (anhMurNAc) with the simultaneous cleavage of the 1,6-anhydro ring, generating MurNAc-6-P. Is required for the utilization of anhMurNAc either imported from the medium or derived from its own cell wall murein, and thus plays a role in cell wall recycling. This is Anhydro-N-acetylmuramic acid kinase from Sulfurimonas denitrificans (strain ATCC 33889 / DSM 1251) (Thiomicrospira denitrificans (strain ATCC 33889 / DSM 1251)).